The primary structure comprises 588 residues: Aspartate--tRNA ligase (588 aa).

Glu-172 provides a ligand contact to L-aspartate. Positions 196-199 are aspartate; that stretch reads QLFK. Arg-218 lines the L-aspartate pocket. Residues 218–220 and Gln-227 contribute to the ATP site; that span reads RDE. His-449 lines the L-aspartate pocket. An ATP-binding site is contributed by Glu-483. Position 490 (Arg-490) interacts with L-aspartate. 535-538 contacts ATP; sequence GLDR.

Belongs to the class-II aminoacyl-tRNA synthetase family. Type 1 subfamily. Homodimer.

The protein resides in the cytoplasm. It carries out the reaction tRNA(Asp) + L-aspartate + ATP = L-aspartyl-tRNA(Asp) + AMP + diphosphate. Functionally, catalyzes the attachment of L-aspartate to tRNA(Asp) in a two-step reaction: L-aspartate is first activated by ATP to form Asp-AMP and then transferred to the acceptor end of tRNA(Asp). The polypeptide is Aspartate--tRNA ligase (Haemophilus influenzae (strain PittGG)).